Reading from the N-terminus, the 363-residue chain is 3-dehydroquinate synthase (363 aa).

Residues 75–80 (DAEEGK), 109–113 (GAVTD), 133–134 (TS), lysine 146, lysine 155, and 173–176 (TLST) contribute to the NAD(+) site. Positions 188, 251, and 267 each coordinate Zn(2+).

It belongs to the sugar phosphate cyclases superfamily. Dehydroquinate synthase family. It depends on Co(2+) as a cofactor. The cofactor is Zn(2+). Requires NAD(+) as cofactor.

It localises to the cytoplasm. The enzyme catalyses 7-phospho-2-dehydro-3-deoxy-D-arabino-heptonate = 3-dehydroquinate + phosphate. The protein operates within metabolic intermediate biosynthesis; chorismate biosynthesis; chorismate from D-erythrose 4-phosphate and phosphoenolpyruvate: step 2/7. Catalyzes the conversion of 3-deoxy-D-arabino-heptulosonate 7-phosphate (DAHP) to dehydroquinate (DHQ). This is 3-dehydroquinate synthase from Arthrobacter sp. (strain FB24).